Consider the following 389-residue polypeptide: Chalcone synthase A (389 aa).

Residue Cys-164 is part of the active site.

The protein belongs to the thiolase-like superfamily. Chalcone/stilbene synthases family. As to expression, major expressed member of the gene family in various floral tissues and in seedlings treated with UV light. It is relatively low expressed in tissue culture material.

It catalyses the reaction (E)-4-coumaroyl-CoA + 3 malonyl-CoA + 3 H(+) = 2',4,4',6'-tetrahydroxychalcone + 3 CO2 + 4 CoA. It functions in the pathway secondary metabolite biosynthesis; flavonoid biosynthesis. Its function is as follows. The primary product of this enzyme is 4,2',4',6'-tetrahydroxychalcone (also termed naringenin-chalcone or chalcone) which can under specific conditions spontaneously isomerize into naringenin. This chain is Chalcone synthase A (CHSA), found in Petunia hybrida (Petunia).